The following is a 205-amino-acid chain: uncharacterized protein (205 aa).

The signal sequence occupies residues 1 to 19 (MKTLCVLSIFLALLGGLCT). Residues 40–133 (VSSVASTSTP…PKTSKNNPKT (94 aa)) show a composition bias toward low complexity. Positions 40 to 135 (VSSVASTSTP…TSKNNPKTQE (96 aa)) are disordered. A helical transmembrane segment spans residues 147–167 (GILYLFILLLIIFVIILICFI).

It localises to the host membrane. This is an uncharacterized protein from Equine herpesvirus 2 (strain 86/87) (EHV-2).